The sequence spans 147 residues: Large ribosomal subunit protein bL9 (147 aa).

It belongs to the bacterial ribosomal protein bL9 family.

Functionally, binds to the 23S rRNA. This Helicobacter hepaticus (strain ATCC 51449 / 3B1) protein is Large ribosomal subunit protein bL9.